Consider the following 462-residue polypeptide: Bifunctional protein HldE (462 aa).

The interval 1–309 is ribokinase; that stretch reads MKPRILVLGD…EYERSIRKAP (309 aa). 186–189 is a binding site for ATP; sequence NKKE. The active site involves D254. The segment at 336 to 462 is cytidylyltransferase; it reads FTNGCFDILH…TAIVERMRSC (127 aa).

In the N-terminal section; belongs to the carbohydrate kinase PfkB family. This sequence in the C-terminal section; belongs to the cytidylyltransferase family. Homodimer.

The catalysed reaction is D-glycero-beta-D-manno-heptose 7-phosphate + ATP = D-glycero-beta-D-manno-heptose 1,7-bisphosphate + ADP + H(+). The enzyme catalyses D-glycero-beta-D-manno-heptose 1-phosphate + ATP + H(+) = ADP-D-glycero-beta-D-manno-heptose + diphosphate. Its pathway is nucleotide-sugar biosynthesis; ADP-L-glycero-beta-D-manno-heptose biosynthesis; ADP-L-glycero-beta-D-manno-heptose from D-glycero-beta-D-manno-heptose 7-phosphate: step 1/4. It participates in nucleotide-sugar biosynthesis; ADP-L-glycero-beta-D-manno-heptose biosynthesis; ADP-L-glycero-beta-D-manno-heptose from D-glycero-beta-D-manno-heptose 7-phosphate: step 3/4. Catalyzes the phosphorylation of D-glycero-D-manno-heptose 7-phosphate at the C-1 position to selectively form D-glycero-beta-D-manno-heptose-1,7-bisphosphate. Functionally, catalyzes the ADP transfer from ATP to D-glycero-beta-D-manno-heptose 1-phosphate, yielding ADP-D-glycero-beta-D-manno-heptose. The protein is Bifunctional protein HldE of Nitratiruptor sp. (strain SB155-2).